Reading from the N-terminus, the 365-residue chain is Peptide chain release factor 2 (365 aa).

Position 251 is an N5-methylglutamine (Q251).

The protein belongs to the prokaryotic/mitochondrial release factor family. In terms of processing, methylated by PrmC. Methylation increases the termination efficiency of RF2.

The protein resides in the cytoplasm. In terms of biological role, peptide chain release factor 2 directs the termination of translation in response to the peptide chain termination codons UGA and UAA. This chain is Peptide chain release factor 2, found in Sulfurimonas denitrificans (strain ATCC 33889 / DSM 1251) (Thiomicrospira denitrificans (strain ATCC 33889 / DSM 1251)).